We begin with the raw amino-acid sequence, 344 residues long: Ketol-acid reductoisomerase (NADP(+)) (344 aa).

The region spanning Met-1–Thr-181 is the KARI N-terminal Rossmann domain. NADP(+) is bound by residues Tyr-25–Gln-28, Arg-48, Ser-52, and Asp-82–Gln-85. His-107 is a catalytic residue. Position 133 (Gly-133) interacts with NADP(+). The region spanning Thr-182 to Ile-327 is the KARI C-terminal knotted domain. Mg(2+) contacts are provided by Asp-190, Glu-194, Glu-226, and Glu-230. Residue Ser-251 participates in substrate binding.

Belongs to the ketol-acid reductoisomerase family. Mg(2+) is required as a cofactor.

It catalyses the reaction (2R)-2,3-dihydroxy-3-methylbutanoate + NADP(+) = (2S)-2-acetolactate + NADPH + H(+). The catalysed reaction is (2R,3R)-2,3-dihydroxy-3-methylpentanoate + NADP(+) = (S)-2-ethyl-2-hydroxy-3-oxobutanoate + NADPH + H(+). It functions in the pathway amino-acid biosynthesis; L-isoleucine biosynthesis; L-isoleucine from 2-oxobutanoate: step 2/4. The protein operates within amino-acid biosynthesis; L-valine biosynthesis; L-valine from pyruvate: step 2/4. Its function is as follows. Involved in the biosynthesis of branched-chain amino acids (BCAA). Catalyzes an alkyl-migration followed by a ketol-acid reduction of (S)-2-acetolactate (S2AL) to yield (R)-2,3-dihydroxy-isovalerate. In the isomerase reaction, S2AL is rearranged via a Mg-dependent methyl migration to produce 3-hydroxy-3-methyl-2-ketobutyrate (HMKB). In the reductase reaction, this 2-ketoacid undergoes a metal-dependent reduction by NADPH to yield (R)-2,3-dihydroxy-isovalerate. The protein is Ketol-acid reductoisomerase (NADP(+)) of Lysinibacillus sphaericus (strain C3-41).